The following is a 317-amino-acid chain: Beta-ketoacyl-[acyl-carrier-protein] synthase III (317 aa).

Residues Cys-112 and His-244 contribute to the active site. The ACP-binding stretch occupies residues 245-249 (QANLR). Asn-274 is a catalytic residue.

It belongs to the thiolase-like superfamily. FabH family. In terms of assembly, homodimer.

It is found in the cytoplasm. It catalyses the reaction malonyl-[ACP] + acetyl-CoA + H(+) = 3-oxobutanoyl-[ACP] + CO2 + CoA. It participates in lipid metabolism; fatty acid biosynthesis. In terms of biological role, catalyzes the condensation reaction of fatty acid synthesis by the addition to an acyl acceptor of two carbons from malonyl-ACP. Catalyzes the first condensation reaction which initiates fatty acid synthesis and may therefore play a role in governing the total rate of fatty acid production. Possesses both acetoacetyl-ACP synthase and acetyl transacylase activities. Its substrate specificity determines the biosynthesis of branched-chain and/or straight-chain of fatty acids. In Salmonella arizonae (strain ATCC BAA-731 / CDC346-86 / RSK2980), this protein is Beta-ketoacyl-[acyl-carrier-protein] synthase III.